We begin with the raw amino-acid sequence, 835 residues long: Leucine--tRNA ligase (835 aa).

Positions 36 to 46 (PYPSGKIHVGH) match the 'HIGH' region motif. Residues 602–606 (KMSKS) carry the 'KMSKS' region motif. Lysine 605 serves as a coordination point for ATP.

The protein belongs to the class-I aminoacyl-tRNA synthetase family.

The protein resides in the cytoplasm. It catalyses the reaction tRNA(Leu) + L-leucine + ATP = L-leucyl-tRNA(Leu) + AMP + diphosphate. This chain is Leucine--tRNA ligase, found in Rickettsia conorii (strain ATCC VR-613 / Malish 7).